Reading from the N-terminus, the 553-residue chain is MSDIALTVSILALVAVVGLFIGNVKFRGIGLGIGGVLFGGIIVGHFVSQAGMTLSSDMLHVIQEFGLILFVYTIGIQVGPGFFASLRVSGLRLNLFAVLIVIIGGLVTAILHKLFDIPLPVVLGIFSGAVTNTPALGAGQQILRDLGTPMEMVDQMGMSYAMAYPFGICGILFTMWMLRVIFRVNVETEAQQHESSRTNGGALIKTINIRVENLNLHDLAIKDVPILNGDKIICSRLKREETLKVPSPDTIIQLGDLLHLVGQPADLHNAQLVIGQEVDTSLSTKGTDLRVERVVVTNENVLGKRIRDLHFKERYDVVISRLNRAGVELVASGDISLQFGDILNLVGRPSAIDAVANVLGNAQQKLQQVQMLPVFIGIGLGVLLGSIPVFVPRFPAALKLGLAGGPLIMALILGRIGSIGKLYWFMPPSANLALRELGIVLFLSVVGLKSGGDFVNTLVNGEGLSWIGYGALITAVPLITVGILARILAKMNYLTMCGMLAGSMTDPPALAFANNLHPTSGAAALSYATVYPLVMFLRIITPQLLAVLFWSIG.

5 helical membrane passes run 4–24, 28–48, 65–85, 95–115, and 158–178; these read IALTVSILALVAVVGLFIGNV, GIGLGIGGVLFGGIIVGHFVS, FGLILFVYTIGIQVGPGFFAS, LFAVLIVIIGGLVTAILHKLF, and MSYAMAYPFGICGILFTMWML. 2 RCK C-terminal domains span residues 191–276 and 279–361; these read QQHE…VIGQ and DTSL…VLGN. The next 5 helical transmembrane spans lie at 371-391, 394-414, 439-459, 464-484, and 533-553; these read MLPVFIGIGLGVLLGSIPVFV, FPAALKLGLAGGPLIMALILG, IVLFLSVVGLKSGGDFVNTLV, LSWIGYGALITAVPLITVGIL, and LVMFLRIITPQLLAVLFWSIG.

Belongs to the AAE transporter (TC 2.A.81) family. YidE subfamily.

Its subcellular location is the cell membrane. This Shigella dysenteriae serotype 1 (strain Sd197) protein is Putative transport protein YidE.